Consider the following 451-residue polypeptide: Tubulin alpha-3 chain (451 aa).

A GTP-binding site is contributed by Gln-11. An N6-acetyllysine modification is found at Lys-40. GTP is bound by residues Glu-71, Gly-144, Thr-145, Thr-179, Asn-206, and Asn-228. Position 71 (Glu-71) interacts with Mg(2+). The active site involves Glu-254.

The protein belongs to the tubulin family. Dimer of alpha and beta chains. A typical microtubule is a hollow water-filled tube with an outer diameter of 25 nm and an inner diameter of 15 nM. Alpha-beta heterodimers associate head-to-tail to form protofilaments running lengthwise along the microtubule wall with the beta-tubulin subunit facing the microtubule plus end conferring a structural polarity. Microtubules usually have 13 protofilaments but different protofilament numbers can be found in some organisms and specialized cells. The cofactor is Mg(2+). In terms of processing, undergoes a tyrosination/detyrosination cycle, the cyclic removal and re-addition of a C-terminal tyrosine residue by the enzymes tubulin tyrosine carboxypeptidase (TTCP) and tubulin tyrosine ligase (TTL), respectively. Acetylation of alpha chains at Lys-40 stabilizes microtubules and affects affinity and processivity of microtubule motors. This modification has a role in multiple cellular functions, ranging from cell motility, cell cycle progression or cell differentiation to intracellular trafficking and signaling.

The protein localises to the cytoplasm. The protein resides in the cytoskeleton. The catalysed reaction is GTP + H2O = GDP + phosphate + H(+). In terms of biological role, tubulin is the major constituent of microtubules, a cylinder consisting of laterally associated linear protofilaments composed of alpha- and beta-tubulin heterodimers. Microtubules grow by the addition of GTP-tubulin dimers to the microtubule end, where a stabilizing cap forms. Below the cap, tubulin dimers are in GDP-bound state, owing to GTPase activity of alpha-tubulin. The sequence is that of Tubulin alpha-3 chain (TUBA3) from Hordeum vulgare (Barley).